The chain runs to 130 residues: Small ribosomal subunit protein uS8 (130 aa).

The protein belongs to the universal ribosomal protein uS8 family. In terms of assembly, part of the 30S ribosomal subunit. Contacts proteins S5 and S12.

Functionally, one of the primary rRNA binding proteins, it binds directly to 16S rRNA central domain where it helps coordinate assembly of the platform of the 30S subunit. The chain is Small ribosomal subunit protein uS8 from Shigella boydii serotype 18 (strain CDC 3083-94 / BS512).